A 734-amino-acid polypeptide reads, in one-letter code: Putative K(+)-stimulated pyrophosphate-energized sodium pump (734 aa).

5 helical membrane passes run 3–23, 58–78, 82–102, 134–154, and 169–189; these read SILFWLVPVASVLALCFAYYF, IVGCVFLGLVILFSIMAYGFH, VWVPIAFLTGGFFSGLSGFLG, VMGLVVVGLGLLDISFWYLLL, and LCVITTTMLTFGMGASTQALF. K199 serves as a coordination point for substrate. Mg(2+) contacts are provided by D202, D206, N229, and D232. A run of 7 helical transmembrane segments spans residues 244–264, 275–295, 314–334, 336–356, 377–397, 398–418, and 423–443; these read LYESYCGSILATAALGAAAFI, AVIAPMLIAAVGILLSIIGIF, FGTNLSSVLIVAATFLILWLL, LDNWIWISCAVVVGLLVGIVI, SGKTGPATVIISGIGLGMLST, AIPVIAVVVGIIASFLLASGF, and VGMGLYGIGIAAVGMLSTLGI. D455 lines the Mg(2+) pocket. 4 helical membrane-spanning segments follow: residues 491-511, 557-577, 629-649, and 650-670; these read FAIGSAALTGLALLASYIEEI, GMFLGSMMAFLFCGLTMNAVG, ILAPIATGLIFGVTGVLGLLI, and GGLSTGFVLAIFMANAGGAWD. Residues D670, D696, and D700 each contribute to the Ca(2+) site. K703 serves as a coordination point for substrate. The chain crosses the membrane as a helical span at residues 712-732; it reads ILIKLMSMVAIVMAGLTVAWS.

It belongs to the H(+)-translocating pyrophosphatase (TC 3.A.10) family. K(+)-stimulated subfamily. Homodimer. Mg(2+) serves as cofactor.

It is found in the cell inner membrane. The catalysed reaction is Na(+)(in) + diphosphate + H2O = Na(+)(out) + 2 phosphate + H(+). With respect to regulation, requires K(+) for maximal activity. Functionally, sodium pump that utilizes the energy of pyrophosphate hydrolysis as the driving force for Na(+) movement across the membrane. The sequence is that of Putative K(+)-stimulated pyrophosphate-energized sodium pump from Bacteroides thetaiotaomicron (strain ATCC 29148 / DSM 2079 / JCM 5827 / CCUG 10774 / NCTC 10582 / VPI-5482 / E50).